The following is a 239-amino-acid chain: MRIDVVTIFPAYLDPLRQSLPGKAIQSGLVDLRVHDLRRWTHDAHRSVDDAPYGGGPGMVMKAPVWGEALDEIASAETLLVVPTPAGVLFDQATAARWSAERHLVFACGRYEGIDQRVVEDAARRMRVEEVSIGDYVLPGGESAAVVMIEAVLRLLDGVLGNPASRHDDSHSPALDRRLEGPSYTRPPSWRGLDVPEVLLSGDHARIAAWRREVSLQRTRERRPELLADPVGPQDDPGR.

S-adenosyl-L-methionine is bound by residues Gly-109 and 133–138; that span reads IGDYVL. Disordered regions lie at residues 163 to 187 and 217 to 239; these read PASRHDDSHSPALDRRLEGPSYTRP and QRTRERRPELLADPVGPQDDPGR. Basic and acidic residues-rich tracts occupy residues 165-180 and 217-226; these read SRHDDSHSPALDRRLE and QRTRERRPEL.

This sequence belongs to the RNA methyltransferase TrmD family. Homodimer.

It is found in the cytoplasm. It catalyses the reaction guanosine(37) in tRNA + S-adenosyl-L-methionine = N(1)-methylguanosine(37) in tRNA + S-adenosyl-L-homocysteine + H(+). Functionally, specifically methylates guanosine-37 in various tRNAs. The sequence is that of tRNA (guanine-N(1)-)-methyltransferase from Mycolicibacterium paratuberculosis (strain ATCC BAA-968 / K-10) (Mycobacterium paratuberculosis).